Consider the following 222-residue polypeptide: MAAPSEVAAAVLGEGDGGGFGSWLDGRLEALGVDQAVYRAYILGVLQEEEEEEKLDALQGILSAFLEEDSLLDICKEIVERWSETRDVTTKVKKEDEVQAITTLIEKQAQIVVKPRVVSEEEKQRKAALLAQYADVTDEEDEADEKADPGASTANIGSDKSLFRNTNVEDVLNARKLERDSLRDESQRKKEQDKLQREKDKLAKQERKEKEKKRTQRGERKR.

A Glycyl lysine isopeptide (Lys-Gly) (interchain with G-Cter in SUMO1) cross-link involves residue Lys93. The stretch at Ser119 to Asp148 forms a coiled coil. The disordered stretch occupies residues Asp135–Arg222. Residues Val136 to Glu145 show a composition bias toward acidic residues. The residue at position 137 (Thr137) is a Phosphothreonine. A compositionally biased stretch (polar residues) spans Ser152–Val168. Residues Leu172–Glu209 show a composition bias toward basic and acidic residues. The stretch at Arg175–Arg217 forms a coiled coil. A compositionally biased stretch (basic residues) spans Lys210 to Arg222.

This sequence belongs to the CCDC43 family.

This is Coiled-coil domain-containing protein 43 (Ccdc43) from Rattus norvegicus (Rat).